The primary structure comprises 251 residues: Outer membrane protein assembly factor BamD (251 aa).

An N-terminal signal peptide occupies residues 1–19 (MKLTKLLSALLVIGLVLGG). Cys20 carries N-palmitoyl cysteine lipidation. Cys20 carries S-diacylglycerol cysteine lipidation. 3 TPR repeats span residues 33–66 (IATL…HPGN), 70–103 (PQAE…HPAN), and 166–199 (AGKE…YQTT).

It belongs to the BamD family. In terms of assembly, part of the Bam complex.

It is found in the cell outer membrane. Its function is as follows. Part of the outer membrane protein assembly complex, which is involved in assembly and insertion of beta-barrel proteins into the outer membrane. The polypeptide is Outer membrane protein assembly factor BamD (Rickettsia prowazekii (strain Madrid E)).